An 87-amino-acid chain; its full sequence is MQKELKQEIINKFKLHETDTGSPEVQIALLTERINHLTEHLKVHKKDYHSRRGLLKMVGHRRGLLNYLMKTDIARYRAIVEKLNLRK.

The protein belongs to the universal ribosomal protein uS15 family. Part of the 30S ribosomal subunit. Forms a bridge to the 50S subunit in the 70S ribosome, contacting the 23S rRNA.

In terms of biological role, one of the primary rRNA binding proteins, it binds directly to 16S rRNA where it helps nucleate assembly of the platform of the 30S subunit by binding and bridging several RNA helices of the 16S rRNA. Its function is as follows. Forms an intersubunit bridge (bridge B4) with the 23S rRNA of the 50S subunit in the ribosome. This chain is Small ribosomal subunit protein uS15, found in Acetivibrio thermocellus (strain ATCC 27405 / DSM 1237 / JCM 9322 / NBRC 103400 / NCIMB 10682 / NRRL B-4536 / VPI 7372) (Clostridium thermocellum).